The primary structure comprises 209 residues: Na(+)-translocating NADH-quinone reductase subunit D (209 aa).

The next 5 helical transmembrane spans lie at 42–62 (LVMT…ISLI), 72–92 (IIVQ…ILQA), 103–123 (VFVG…AYAM), 131–151 (FMDG…VGFL), and 178–198 (NGLF…IWGL).

Belongs to the NqrDE/RnfAE family. In terms of assembly, composed of six subunits; NqrA, NqrB, NqrC, NqrD, NqrE and NqrF.

The protein resides in the cell inner membrane. It catalyses the reaction a ubiquinone + n Na(+)(in) + NADH + H(+) = a ubiquinol + n Na(+)(out) + NAD(+). Functionally, NQR complex catalyzes the reduction of ubiquinone-1 to ubiquinol by two successive reactions, coupled with the transport of Na(+) ions from the cytoplasm to the periplasm. NqrA to NqrE are probably involved in the second step, the conversion of ubisemiquinone to ubiquinol. This chain is Na(+)-translocating NADH-quinone reductase subunit D, found in Photorhabdus laumondii subsp. laumondii (strain DSM 15139 / CIP 105565 / TT01) (Photorhabdus luminescens subsp. laumondii).